The primary structure comprises 96 residues: MAFNMITFLQMAVFVVILFNINLHSASAGSKESSAHQSSDDSIKAEFCDAKCTMKTDGKWTQCHGGCFCVHVGNETEGRCMRLDGDYDYPSTQPEE.

The N-terminal stretch at 1–28 is a signal peptide; it reads MAFNMITFLQMAVFVVILFNINLHSASA. 3 cysteine pairs are disulfide-bonded: Cys-48–Cys-67, Cys-52–Cys-69, and Cys-63–Cys-80. The N-linked (GlcNAc...) asparagine glycan is linked to Asn-74.

It localises to the secreted. In terms of biological role, salivary chemokine-binding protein which binds to host chemokines CXCL1 and CXCL8. The protein is Evasin P1074 of Ixodes ricinus (Common tick).